We begin with the raw amino-acid sequence, 271 residues long: 3-methyl-2-oxobutanoate hydroxymethyltransferase (271 aa).

Positions 49 and 88 each coordinate Mg(2+). Residues 49-50 (DS), Asp88, and Lys118 contribute to the 3-methyl-2-oxobutanoate site. Glu120 serves as a coordination point for Mg(2+). Glu187 serves as the catalytic Proton acceptor.

Belongs to the PanB family. In terms of assembly, homodecamer; pentamer of dimers. Mg(2+) is required as a cofactor.

Its subcellular location is the cytoplasm. It carries out the reaction 3-methyl-2-oxobutanoate + (6R)-5,10-methylene-5,6,7,8-tetrahydrofolate + H2O = 2-dehydropantoate + (6S)-5,6,7,8-tetrahydrofolate. Its pathway is cofactor biosynthesis; (R)-pantothenate biosynthesis; (R)-pantoate from 3-methyl-2-oxobutanoate: step 1/2. Its function is as follows. Catalyzes the reversible reaction in which hydroxymethyl group from 5,10-methylenetetrahydrofolate is transferred onto alpha-ketoisovalerate to form ketopantoate. This chain is 3-methyl-2-oxobutanoate hydroxymethyltransferase, found in Bartonella tribocorum (strain CIP 105476 / IBS 506).